The sequence spans 79 residues: U1-plectoxin-Pt1c (79 aa).

An N-terminal signal peptide occupies residues 1 to 18; it reads HLILASALICALVVCTFA. Positions 19–31 are excised as a propeptide; sequence EEQVNVPFLPDER. Cystine bridges form between Cys35/Cys49, Cys42/Cys55, Cys48/Cys66, Cys52/Cys75, and Cys57/Cys64. The propeptide occupies 78–79; that stretch reads RR.

It belongs to the neurotoxin 02 (plectoxin) family. 02 (plectoxin) subfamily. As to expression, expressed by the venom gland.

Its subcellular location is the secreted. Functionally, potent toxin that may paralyze and/or kill insect pests such as H.virescens (lepidoptera), S.exigua (beet armyworm) and M.sexta (tobacco hornworm). The sequence is that of U1-plectoxin-Pt1c from Plectreurys tristis (Spider).